The sequence spans 647 residues: Threonine--tRNA ligase (647 aa).

The TGS domain maps to 1 to 61; the sequence is MIKITFPDGA…EEDGSIEIVT (61 aa). Positions 240–538 are catalytic; that stretch reads DHRKLGKELD…LIETYKGAFP (299 aa). Zn(2+)-binding residues include C334, H385, and H515.

It belongs to the class-II aminoacyl-tRNA synthetase family. In terms of assembly, homodimer. Zn(2+) is required as a cofactor.

It localises to the cytoplasm. It carries out the reaction tRNA(Thr) + L-threonine + ATP = L-threonyl-tRNA(Thr) + AMP + diphosphate + H(+). In terms of biological role, catalyzes the attachment of threonine to tRNA(Thr) in a two-step reaction: L-threonine is first activated by ATP to form Thr-AMP and then transferred to the acceptor end of tRNA(Thr). Also edits incorrectly charged L-seryl-tRNA(Thr). This Streptococcus pyogenes serotype M49 (strain NZ131) protein is Threonine--tRNA ligase.